The chain runs to 107 residues: Inner membrane protein YiaW (107 aa).

The Cytoplasmic portion of the chain corresponds to 1-6 (MFLDYF). Residues 7–29 (ALGVLIFVFLVIFYGIIILHDIP) traverse the membrane as a helical segment. The Periplasmic segment spans residues 30-43 (YLIAKKRNHPHADA). A helical membrane pass occupies residues 44 to 66 (IHVAGWVSLFTLHVIWPFLWIWA). Topologically, residues 67–107 (TLYRPERGWGMQSHDSSVMQLQQRIAGLEKQLADIKSSSAE) are cytoplasmic.

It to E.coli YibI.

It localises to the cell inner membrane. The polypeptide is Inner membrane protein YiaW (yiaW) (Escherichia coli O157:H7).